The primary structure comprises 276 residues: ATP synthase subunit a (276 aa).

6 helical membrane-spanning segments follow: residues 47–67, 107–127, 152–172, 188–208, 226–246, and 247–267; these read WHIDSLLFSVGLGVLFLWLFY, IAPLGLTIFVWVFLMNLMDLI, DLNVTLGLALSVFALIVFYSI, PFNHWALIPINFVLETVTLVA, LIFILIALMPWWAQFALSVPW, and AIFHILVIVLQAFIFMMLTIV.

It belongs to the ATPase A chain family. In terms of assembly, F-type ATPases have 2 components, CF(1) - the catalytic core - and CF(0) - the membrane proton channel. CF(1) has five subunits: alpha(3), beta(3), gamma(1), delta(1), epsilon(1). CF(0) has three main subunits: a(1), b(2) and c(9-12). The alpha and beta chains form an alternating ring which encloses part of the gamma chain. CF(1) is attached to CF(0) by a central stalk formed by the gamma and epsilon chains, while a peripheral stalk is formed by the delta and b chains.

It is found in the cell inner membrane. Key component of the proton channel; it plays a direct role in the translocation of protons across the membrane. This Shewanella pealeana (strain ATCC 700345 / ANG-SQ1) protein is ATP synthase subunit a.